We begin with the raw amino-acid sequence, 207 residues long: uncharacterized protein (207 aa).

It to M.leprae ML1660.

This is an uncharacterized protein from Mycobacterium tuberculosis (strain CDC 1551 / Oshkosh).